The sequence spans 473 residues: Maltose fermentation regulatory protein MAL63 (473 aa).

Positions 8-34 form a DNA-binding region, zn(2)-C6 fungal-type; sequence CDCCRVRRVKCDRNKPCNRCIQRNLNC. The Nuclear localization signal signature appears at 41-49; it reads KKRGPKSIR.

It belongs to the MAL13 family.

The protein localises to the nucleus. In terms of biological role, regulates the coordinate transcription of structural MAL6S (maltase) and MAL6T (maltose permease) genes. This Saccharomyces cerevisiae (Baker's yeast) protein is Maltose fermentation regulatory protein MAL63 (MAL63).